Here is a 350-residue protein sequence, read N- to C-terminus: Ion-translocating oxidoreductase complex subunit D (350 aa).

4 helical membrane passes run 20-40 (VMLW…LFFG), 42-62 (GNLI…AAFL), 89-109 (LPQF…IVVA), and 120-140 (PFNP…VAMT). FMN phosphoryl threonine is present on Thr178. The next 5 membrane-spanning stretches (helical) occupy residues 204 to 224 (LIAR…VLLI), 228 to 248 (IITW…SLAF), 255 to 275 (YAPL…FFIA), 282 to 302 (ATSH…VYLI), and 306 to 326 (GNYP…VPFI).

The protein belongs to the NqrB/RnfD family. The complex is composed of six subunits: RnfA, RnfB, RnfC, RnfD, RnfE and RnfG. FMN is required as a cofactor.

The protein resides in the cell inner membrane. Its function is as follows. Part of a membrane-bound complex that couples electron transfer with translocation of ions across the membrane. This chain is Ion-translocating oxidoreductase complex subunit D, found in Marinobacter nauticus (strain ATCC 700491 / DSM 11845 / VT8) (Marinobacter aquaeolei).